A 421-amino-acid polypeptide reads, in one-letter code: Succinate--CoA ligase [ADP-forming] subunit beta, mitochondrial (421 aa).

The N-terminal 26 residues, 1 to 26, are a transit peptide targeting the mitochondrion; the sequence is MRGLVNKLVSRSLSISGKWQNQQLRR. Residues 35–278 form the ATP-grasp domain; it reads AELMGKYGVN…PTQEDPREVA (244 aa). Residues lysine 74, 81 to 83, and glutamate 141 each bind ATP; that span reads GRG. Mg(2+)-binding residues include asparagine 233 and aspartate 247. Substrate contacts are provided by residues asparagine 298 and 355–357; that span reads GIM.

This sequence belongs to the succinate/malate CoA ligase beta subunit family. Heterodimer of an alpha and a beta subunit. Mg(2+) is required as a cofactor.

The protein localises to the mitochondrion. The enzyme catalyses succinate + ATP + CoA = succinyl-CoA + ADP + phosphate. The protein operates within carbohydrate metabolism; tricarboxylic acid cycle; succinate from succinyl-CoA (ligase route): step 1/1. In terms of biological role, succinyl-CoA synthetase functions in the citric acid cycle (TCA), coupling the hydrolysis of succinyl-CoA to the synthesis of ATP and thus represents the only step of substrate-level phosphorylation in the TCA. The beta subunit provides nucleotide specificity of the enzyme and binds the substrate succinate, while the binding sites for coenzyme A and phosphate are found in the alpha subunit. This is Succinate--CoA ligase [ADP-forming] subunit beta, mitochondrial from Arabidopsis thaliana (Mouse-ear cress).